The chain runs to 892 residues: DNA mismatch repair protein MutS (892 aa).

A disordered region spans residues 663-684 (TNTSLREAAPTTTLSTSDQGQM). 696-703 (GPNASGKS) lines the ATP pocket.

The protein belongs to the DNA mismatch repair MutS family.

Its function is as follows. This protein is involved in the repair of mismatches in DNA. It is possible that it carries out the mismatch recognition step. This protein has a weak ATPase activity. This is DNA mismatch repair protein MutS from Nostoc punctiforme (strain ATCC 29133 / PCC 73102).